A 186-amino-acid chain; its full sequence is MTVRDVIQKIEPRMKKTIEAFQHELASIRTGKATTALLDRVKVEAYGSQMPLKQVGNVGVLDAHTLTVQVWDKSMVGATERAIRDAGLGLNPSADGQNIRISIPPLTEERRKEFVKLTKKFGEDSKVSLRNHRRDLIHEVEKLEKEKLISEDELKRGKKDADDLLHKYEKQITELIAQKEKEIMEV.

Belongs to the RRF family.

The protein resides in the cytoplasm. In terms of biological role, responsible for the release of ribosomes from messenger RNA at the termination of protein biosynthesis. May increase the efficiency of translation by recycling ribosomes from one round of translation to another. This Chlorobaculum tepidum (strain ATCC 49652 / DSM 12025 / NBRC 103806 / TLS) (Chlorobium tepidum) protein is Ribosome-recycling factor.